A 71-amino-acid polypeptide reads, in one-letter code: U3-agatoxin-Ao1a (71 aa).

An N-terminal signal peptide occupies residues 1–20 (MKAVIFFCLLSVMVFTVIEA). Positions 21 to 33 (VKEEGTKPAEAAR) are excised as a propeptide. 4 cysteine pairs are disulfide-bonded: C35/C51, C42/C56, C50/C66, and C58/C64. S70 carries the post-translational modification Serine amide.

This sequence belongs to the neurotoxin 07 (Beta/delta-agtx) family. 01 (aga-2) subfamily. Expressed by the venom gland.

Its subcellular location is the secreted. In terms of biological role, insecticidal neurotoxin that modulates the insect Nav channel (DmNaV1/tipE (para/tipE)) in a unique manner, with both the activation and inactivation processes being affected. The voltage dependence of activation is shifted toward more hyperpolarized potentials (analogous to site 4 toxins) and a non-inactivating persistent sodium current is induced (site 3-like action). Interestingly, both effects take place in a voltage-dependent manner, producing a bell-shaped curve between -80 and 0 mV. Compared to beta/delta-agatoxin-1 to -3, this toxin appears to affect the insect sodium channel only weakly. This is U3-agatoxin-Ao1a from Agelena orientalis (Funnel-web spider).